The chain runs to 332 residues: Leucine carboxyl methyltransferase 1 homolog (332 aa).

S-adenosyl-L-methionine contacts are provided by residues Lys-22, Arg-57, Gly-83, Asp-107, 153 to 154, and Glu-180; that span reads DL.

This sequence belongs to the methyltransferase superfamily. LCMT family.

The protein localises to the cytoplasm. The protein resides in the membrane. The catalysed reaction is [phosphatase 2A protein]-C-terminal L-leucine + S-adenosyl-L-methionine = [phosphatase 2A protein]-C-terminal L-leucine methyl ester + S-adenosyl-L-homocysteine. Methylates the carboxyl group of the C-terminal leucine residue of protein phosphatase 2A (PP2A) catalytic subunits to form alpha-leucine ester residues. Involved in brassinosteroid (BR) signaling. Plays a negative role in BR signaling pathway. Functions as a positive regulator of BRI1 receptor-kinase degradation. Methylates PP2A, thus facilitating its association with activated BRI1. This leads to receptor dephosphorylation and degradation, and thus to the termination of BR signaling. May act upstream of ASK7/BIN2. Involved in methylation of PP2A during environmental stress responses. This Arabidopsis thaliana (Mouse-ear cress) protein is Leucine carboxyl methyltransferase 1 homolog.